The primary structure comprises 815 residues: Plakophilin-2 (815 aa).

Residues 1-12 are compositionally biased toward basic and acidic residues; that stretch reads MLKPHPEHKEQP. Disordered stretches follow at residues 1 to 31 and 76 to 105; these read MLKP…MAEE and QLTL…ISSS. A compositionally biased stretch (polar residues) spans 13–25; sequence QDSFTPSGDSTPD. Positions 91–105 are enriched in low complexity; it reads SSLAESQSSCQISSS. 9 ARM repeats span residues 317-357, 360-399, 402-442, 457-498, 501-547, 604-644, 652-691, 693-737, and 740-783; these read KGKP…NQCF, PDAK…NIVF, NENK…NLSS, PLTD…NLSS, PDGR…NLSY, PHGV…NLTA, AIAH…NISR, RELH…NLSQ, and ASNT…TLWR.

This sequence belongs to the beta-catenin family.

Its subcellular location is the nucleus. The protein localises to the cell junction. The protein resides in the desmosome. It is found in the cytoplasm. In terms of biological role, required for development of the heart, potentially via cell-cell adhesion and modulation of expression of cardiac precursor genes. Plays a role in desmosome cell-cell junctions and their intracellular connectivity. The protein is Plakophilin-2 of Danio rerio (Zebrafish).